Reading from the N-terminus, the 461-residue chain is Cysteine--tRNA ligase (461 aa).

Cysteine 28 provides a ligand contact to Zn(2+). Residues 30 to 40 carry the 'HIGH' region motif; the sequence is VTIYDLCHIGH. The Zn(2+) site is built by cysteine 209, histidine 234, and glutamate 238. Positions 266–270 match the 'KMSKS' region motif; the sequence is KMSKS. Lysine 269 contacts ATP.

The protein belongs to the class-I aminoacyl-tRNA synthetase family. Monomer. Zn(2+) serves as cofactor.

It localises to the cytoplasm. The catalysed reaction is tRNA(Cys) + L-cysteine + ATP = L-cysteinyl-tRNA(Cys) + AMP + diphosphate. This chain is Cysteine--tRNA ligase, found in Vibrio atlanticus (strain LGP32) (Vibrio splendidus (strain Mel32)).